The chain runs to 518 residues: T-box transcription factor TBX5 (518 aa).

The segment at 1 to 46 (MADADEGFGLAHTPLEPDAKDLPCDSKPESALGAPSKSPSSPQAAF) is disordered. A compositionally biased stretch (basic and acidic residues) spans 15–28 (LEPDAKDLPCDSKP). A compositionally biased stretch (low complexity) spans 34-45 (APSKSPSSPQAA). Residues 58–238 (LHERELWLKF…NNPFAKGFRG (181 aa)) constitute a DNA-binding region (T-box). Residues 250–356 (MQSKEYPVVP…PSEEDSFYRS (107 aa)) form a disordered region. Polar residues predominate over residues 262-301 (TVRQKVASNHSPFSSESRALSTSSNLGSQYQCENGVSGPS). At Lys-339 the chain carries N6-acetyllysine.

Monomer. Homodimer (via the T-box); binds DNA as homodimer. Interacts (via the T-box) with NKX2-5 (via the homeobox); this complex binds DNA. Interacts with GATA4. Interacts with KAT2A and KAT2B. In terms of processing, acetylation at Lys-339 by KAT2A and KAT2B promotes nuclear retention.

The protein resides in the nucleus. The protein localises to the cytoplasm. In terms of biological role, DNA-binding protein that regulates the transcription of several genes and is involved in heart development and limb pattern formation. Binds to the core DNA motif of NPPA promoter. The polypeptide is T-box transcription factor TBX5 (TBX5) (Homo sapiens (Human)).